We begin with the raw amino-acid sequence, 214 residues long: Ribonuclease HII (214 aa).

The RNase H type-2 domain occupies 26–214; that stretch reads EIVCGVDEAG…PVREAFDLIR (189 aa). A divalent metal cation contacts are provided by Asp-32, Glu-33, and Asp-124.

The protein belongs to the RNase HII family. The cofactor is Mn(2+). It depends on Mg(2+) as a cofactor.

It is found in the cytoplasm. It carries out the reaction Endonucleolytic cleavage to 5'-phosphomonoester.. Functionally, endonuclease that specifically degrades the RNA of RNA-DNA hybrids. The protein is Ribonuclease HII of Burkholderia pseudomallei (strain 1710b).